The sequence spans 278 residues: Fasciclin-like arabinogalactan protein 5 (278 aa).

Residues 1-24 (MGLKASLSLLSLTILLVFSKVVTA) form the signal peptide. An FAS1 domain is found at 25-169 (NNITLAFQKY…LSIIQITMPI (145 aa)). N-linked (GlcNAc...) asparagine glycans are attached at residues Asn-26, Asn-74, Asn-126, and Asn-159. Residues 199–257 (VVPAPGPAADDNSPDSAVPKTPPAPATDTPEADSPAPAPSADNEKIEAADKAKPSSSAS) are disordered. The segment covering 224 to 239 (ATDTPEADSPAPAPSA) has biased composition (low complexity). A compositionally biased stretch (basic and acidic residues) spans 240–251 (DNEKIEAADKAK). Ser-255 carries GPI-anchor amidated serine lipidation. A propeptide spans 256-278 (ASKAGWSFDVILLLAFLASFAGF) (removed in mature form).

The protein belongs to the fasciclin-like AGP family.

The protein localises to the cell membrane. May be a cell surface adhesion protein. The polypeptide is Fasciclin-like arabinogalactan protein 5 (FLA5) (Arabidopsis thaliana (Mouse-ear cress)).